Reading from the N-terminus, the 202-residue chain is Protein-methionine-sulfoxide reductase heme-binding subunit MsrQ (202 aa).

Transmembrane regions (helical) follow at residues 8–28 (YAWL…FLLW), 50–70 (LALI…WLGW), 76–96 (IRKA…GIYL), 114–134 (PFIT…LTSG), 148–168 (LLHR…WWGV), and 174–194 (GPLL…KTPA).

This sequence belongs to the MsrQ family. As to quaternary structure, heterodimer of a catalytic subunit (MsrP) and a heme-binding subunit (MsrQ). FMN serves as cofactor. It depends on heme b as a cofactor.

The protein resides in the cell membrane. Its function is as follows. Part of the MsrPQ system that repairs oxidized cell envelope proteins containing methionine sulfoxide residues (Met-O), using respiratory chain electrons. Thus protects these proteins from oxidative-stress damage caused by reactive species of oxygen and chlorine. MsrPQ is essential for the maintenance of envelope integrity under bleach stress, rescuing a wide series of structurally unrelated cell envelope proteins from methionine oxidation. MsrQ provides electrons for reduction to the reductase catalytic subunit MsrP, using the quinone pool of the respiratory chain. The protein is Protein-methionine-sulfoxide reductase heme-binding subunit MsrQ of Deinococcus radiodurans (strain ATCC 13939 / DSM 20539 / JCM 16871 / CCUG 27074 / LMG 4051 / NBRC 15346 / NCIMB 9279 / VKM B-1422 / R1).